We begin with the raw amino-acid sequence, 57 residues long: uncharacterized protein (57 aa).

Residues 10–27 traverse the membrane as a helical segment; sequence FGLLWLIIGSEAFHLNAL. The stretch at 28–55 forms a coiled coil; that stretch reads KQDHLERMKQYDAKIRLAKHEFDDTSNE.

It is found in the membrane. This is an uncharacterized protein from Schizosaccharomyces pombe (strain 972 / ATCC 24843) (Fission yeast).